The chain runs to 197 residues: Thymidylate kinase (197 aa).

7–14 lines the ATP pocket; that stretch reads GIDGSGKS.

This sequence belongs to the thymidylate kinase family.

It catalyses the reaction dTMP + ATP = dTDP + ADP. In terms of biological role, phosphorylation of dTMP to form dTDP in both de novo and salvage pathways of dTTP synthesis. This is Thymidylate kinase from Thermotoga sp. (strain RQ2).